The chain runs to 442 residues: UDP-N-acetylmuramate--L-alanine ligase (442 aa).

109–115 contacts ATP; sequence GAHGKTS.

Belongs to the MurCDEF family.

It localises to the cytoplasm. It catalyses the reaction UDP-N-acetyl-alpha-D-muramate + L-alanine + ATP = UDP-N-acetyl-alpha-D-muramoyl-L-alanine + ADP + phosphate + H(+). It participates in cell wall biogenesis; peptidoglycan biosynthesis. Functionally, cell wall formation. The sequence is that of UDP-N-acetylmuramate--L-alanine ligase from Streptococcus pyogenes serotype M6 (strain ATCC BAA-946 / MGAS10394).